Reading from the N-terminus, the 231-residue chain is PIAGSMVLAAILLKLGGYGIIRMMQILPTTKTDMFLPFVVLALWGAILANLTCLQQTDLKSLIAYSSVSHMGLVVAAIIIQTPWGLAGAMTLMIAHGFTSSALFCLANTTYERTHTRILILTRGFHNILPMATTWWLLTNLMNIAIPPSMNFTSELLITSALFNWCPTTIILLGLSMLITASYSLHMFLSTQMGPTLLNNQTEPTHSREHLLMTLHITPLMMISMKPELIM.

A run of 6 helical transmembrane segments spans residues 1-21, 34-54, 61-80, 85-107, 128-148, and 169-189; these read PIAGSMVLAAILLKLGGYGII, MFLPFVVLALWGAILANLTCL, SLIAYSSVSHMGLVVAAIII, GLAGAMTLMIAHGFTSSALFCLA, ILPMATTWWLLTNLMNIAIPP, and TIILLGLSMLITASYSLHMFL.

The protein belongs to the complex I subunit 4 family.

The protein localises to the mitochondrion membrane. The enzyme catalyses a ubiquinone + NADH + 5 H(+)(in) = a ubiquinol + NAD(+) + 4 H(+)(out). Functionally, core subunit of the mitochondrial membrane respiratory chain NADH dehydrogenase (Complex I) that is believed to belong to the minimal assembly required for catalysis. Complex I functions in the transfer of electrons from NADH to the respiratory chain. The immediate electron acceptor for the enzyme is believed to be ubiquinone. In Gloydius blomhoffii (Mamushi), this protein is NADH-ubiquinone oxidoreductase chain 4 (MT-ND4).